The chain runs to 60 residues: Cytotoxin 2 (60 aa).

4 disulfide bridges follow: Cys-3–Cys-21, Cys-14–Cys-38, Cys-42–Cys-53, and Cys-54–Cys-59.

The protein belongs to the three-finger toxin family. Short-chain subfamily. Type IA cytotoxin sub-subfamily. As to quaternary structure, monomer in solution; Homodimer and oligomer in the presence of negatively charged lipids forming a pore with a size ranging between 20 and 30 Angstroms. In terms of tissue distribution, expressed by the venom gland.

Its subcellular location is the secreted. It is found in the target cell membrane. Shows cytolytic activity on many different cells by forming pore in lipid membranes. In vivo, increases heart rate or kills the animal by cardiac arrest. In addition, it binds to heparin with high affinity, interacts with Kv channel-interacting protein 1 (KCNIP1) in a calcium-independent manner, and binds to integrin alpha-V/beta-3 (ITGAV/ITGB3) with moderate affinity. This Naja mossambica (Mozambique spitting cobra) protein is Cytotoxin 2.